The primary structure comprises 631 residues: Mercuric reductase (631 aa).

HMA domains are found at residues 2 to 66 (KKYR…YHPG) and 81 to 145 (KKYR…YQPG). Residues cysteine 13, cysteine 16, cysteine 92, and cysteine 95 each coordinate a metal cation. The FAD site is built by alanine 181, glycine 201, and threonine 206. A disulfide bond links cysteine 207 and cysteine 212. Residues lysine 216, aspartate 472, and valine 480 each contribute to the FAD site. Hg(2+) contacts are provided by cysteine 628 and cysteine 629.

The protein belongs to the class-I pyridine nucleotide-disulfide oxidoreductase family. In terms of assembly, homodimer. The cofactor is FAD.

The catalysed reaction is Hg + NADP(+) + H(+) = Hg(2+) + NADPH. Functionally, resistance to Hg(2+) in bacteria appears to be governed by a specialized system which includes mercuric reductase. MerA protein is responsible for volatilizing mercury as Hg(0). This Bacillus cereus protein is Mercuric reductase (merA).